The sequence spans 229 residues: GSKNASNPKDGAASKGGKDGKTTADRKVAWERIRCAIPRDKDAESKSRRIELFKQFDTNGTGKLGFREVLDGCYGILKLDEFTTHLPDIVQRAFDKAKDLGNKVKGVGEEDLVEFLEFRLMLCYIYDIFELTVMFDTMDKDGSLLLELQEFKEALPKLKEWGVDITDATTVFNEIDTNGSGVVTFDEFSCWAVTKKLQVCGDPDDEENGANEGDGANAGDGVPAAEGSA.

Residues 1-25 are disordered; it reads GSKNASNPKDGAASKGGKDGKTTAD. A compositionally biased stretch (basic and acidic residues) spans 16–25; that stretch reads GGKDGKTTAD. 4 consecutive EF-hand domains span residues 44 to 79, 80 to 115, 126 to 161, and 163 to 198; these read ESKS…ILKL, DEFT…LVEF, YDIF…LKEW, and VDIT…KKLQ. Ca(2+) contacts are provided by Asp57, Asn59, Thr61, Lys63, and Glu68. Ca(2+)-binding residues include Asp139, Asp141, Ser143, Glu150, Asp176, Asn178, Ser180, and Glu187. A disordered region spans residues 202–229; that stretch reads DPDDEENGANEGDGANAGDGVPAAEGSA. Residues 210-221 show a composition bias toward low complexity; that stretch reads ANEGDGANAGDG.

The protein belongs to the calflagin family.

The protein resides in the cell projection. The protein localises to the cilium. It is found in the flagellum. May contribute to the rapid motility of the trypanosomes, playing a role either in flagellar structure or in calcium metabolism. Could alternate between a GDP-bound inactive form to a calcium/GTP-bound active form. This Trypanosoma brucei brucei protein is Flagellar calcium-binding protein TB-1.7G.